Here is a 119-residue protein sequence, read N- to C-terminus: Large ribosomal subunit protein bL20 (119 aa).

Belongs to the bacterial ribosomal protein bL20 family.

In terms of biological role, binds directly to 23S ribosomal RNA and is necessary for the in vitro assembly process of the 50S ribosomal subunit. It is not involved in the protein synthesizing functions of that subunit. The sequence is that of Large ribosomal subunit protein bL20 from Clostridium botulinum (strain Alaska E43 / Type E3).